The chain runs to 275 residues: Formamidopyrimidine-DNA glycosylase (275 aa).

Pro-2 acts as the Schiff-base intermediate with DNA in catalysis. Catalysis depends on Glu-3, which acts as the Proton donor. The active-site Proton donor; for beta-elimination activity is the Lys-58. DNA is bound by residues His-91 and Arg-110. The segment at Gln-238 to Lys-272 adopts an FPG-type zinc-finger fold. Catalysis depends on Arg-262, which acts as the Proton donor; for delta-elimination activity.

The protein belongs to the FPG family. As to quaternary structure, monomer. It depends on Zn(2+) as a cofactor.

The catalysed reaction is Hydrolysis of DNA containing ring-opened 7-methylguanine residues, releasing 2,6-diamino-4-hydroxy-5-(N-methyl)formamidopyrimidine.. It catalyses the reaction 2'-deoxyribonucleotide-(2'-deoxyribose 5'-phosphate)-2'-deoxyribonucleotide-DNA = a 3'-end 2'-deoxyribonucleotide-(2,3-dehydro-2,3-deoxyribose 5'-phosphate)-DNA + a 5'-end 5'-phospho-2'-deoxyribonucleoside-DNA + H(+). Involved in base excision repair of DNA damaged by oxidation or by mutagenic agents. Acts as a DNA glycosylase that recognizes and removes damaged bases. Has a preference for oxidized purines, such as 7,8-dihydro-8-oxoguanine (8-oxoG). Has AP (apurinic/apyrimidinic) lyase activity and introduces nicks in the DNA strand. Cleaves the DNA backbone by beta-delta elimination to generate a single-strand break at the site of the removed base with both 3'- and 5'-phosphates. In Streptococcus pyogenes serotype M18 (strain MGAS8232), this protein is Formamidopyrimidine-DNA glycosylase.